The chain runs to 216 residues: Thiamine-phosphate synthase (216 aa).

4-amino-2-methyl-5-(diphosphooxymethyl)pyrimidine contacts are provided by residues Gln37 to Lys41 and Asp68. The Mg(2+) site is built by Asp69 and Asp93. Thr112 contacts 4-amino-2-methyl-5-(diphosphooxymethyl)pyrimidine. Thr140–Thr142 contacts 2-[(2R,5Z)-2-carboxy-4-methylthiazol-5(2H)-ylidene]ethyl phosphate. Lys143 contacts 4-amino-2-methyl-5-(diphosphooxymethyl)pyrimidine.

This sequence belongs to the thiamine-phosphate synthase family. Requires Mg(2+) as cofactor.

The enzyme catalyses 2-[(2R,5Z)-2-carboxy-4-methylthiazol-5(2H)-ylidene]ethyl phosphate + 4-amino-2-methyl-5-(diphosphooxymethyl)pyrimidine + 2 H(+) = thiamine phosphate + CO2 + diphosphate. It carries out the reaction 2-(2-carboxy-4-methylthiazol-5-yl)ethyl phosphate + 4-amino-2-methyl-5-(diphosphooxymethyl)pyrimidine + 2 H(+) = thiamine phosphate + CO2 + diphosphate. The catalysed reaction is 4-methyl-5-(2-phosphooxyethyl)-thiazole + 4-amino-2-methyl-5-(diphosphooxymethyl)pyrimidine + H(+) = thiamine phosphate + diphosphate. Its pathway is cofactor biosynthesis; thiamine diphosphate biosynthesis; thiamine phosphate from 4-amino-2-methyl-5-diphosphomethylpyrimidine and 4-methyl-5-(2-phosphoethyl)-thiazole: step 1/1. Condenses 4-methyl-5-(beta-hydroxyethyl)thiazole monophosphate (THZ-P) and 2-methyl-4-amino-5-hydroxymethyl pyrimidine pyrophosphate (HMP-PP) to form thiamine monophosphate (TMP). The sequence is that of Thiamine-phosphate synthase from Corynebacterium efficiens (strain DSM 44549 / YS-314 / AJ 12310 / JCM 11189 / NBRC 100395).